The primary structure comprises 275 residues: 2,3,4,5-tetrahydropyridine-2,6-dicarboxylate N-succinyltransferase (275 aa).

Substrate contacts are provided by R108 and D145.

This sequence belongs to the transferase hexapeptide repeat family. Homotrimer.

Its subcellular location is the cytoplasm. The catalysed reaction is (S)-2,3,4,5-tetrahydrodipicolinate + succinyl-CoA + H2O = (S)-2-succinylamino-6-oxoheptanedioate + CoA. The protein operates within amino-acid biosynthesis; L-lysine biosynthesis via DAP pathway; LL-2,6-diaminopimelate from (S)-tetrahydrodipicolinate (succinylase route): step 1/3. This is 2,3,4,5-tetrahydropyridine-2,6-dicarboxylate N-succinyltransferase from Roseobacter denitrificans (strain ATCC 33942 / OCh 114) (Erythrobacter sp. (strain OCh 114)).